The following is a 149-amino-acid chain: GATA transcription factor 15 (149 aa).

Residues 1 to 10 (MLDPTEKVID) are compositionally biased toward basic and acidic residues. Disordered stretches follow at residues 1 to 41 (MLDP…NEKK) and 76 to 102 (RRTLISNRSEDKKKKSHNRNPKFGDSL). Residues 37-91 (SNEKKSCAICGTSKTPLWRGGPAGPKSLCNACGIRNRKKRRTLISNRSEDKKKKS) form a GATA-type zinc finger.

The protein belongs to the type IV zinc-finger family. Class B subfamily.

The protein localises to the nucleus. In terms of biological role, transcriptional regulator that specifically binds 5'-GATA-3' or 5'-GAT-3' motifs within gene promoters. The chain is GATA transcription factor 15 (GATA15) from Arabidopsis thaliana (Mouse-ear cress).